A 310-amino-acid polypeptide reads, in one-letter code: Prephenate dehydratase (310 aa).

Residues 3–190 (RIAYLGPEGT…ARTRFVLVGL (188 aa)) enclose the Prephenate dehydratase domain. Positions 204 to 281 (AVVLRLVNEP…VDVRYLGSWP (78 aa)) constitute an ACT domain.

Homodimer.

It catalyses the reaction prephenate + H(+) = 3-phenylpyruvate + CO2 + H2O. Its pathway is amino-acid biosynthesis; L-phenylalanine biosynthesis; phenylpyruvate from prephenate: step 1/1. The protein is Prephenate dehydratase (pheA) of Mycolicibacterium smegmatis (strain ATCC 700084 / mc(2)155) (Mycobacterium smegmatis).